The sequence spans 384 residues: MSKSALLVLEDGTVFRGISIGADGSAIGEVVFNTSMTGYQEILTDPSYSQQIVTLTYPHIGNTGTNSEDEESNSIHAQGLVIRDLPLLASNFRNERSLSDYLKSQNIVGIAEIDTRKLTRILREKGAQNGCIMAGDNLDEALALDKAKEFPGLKGMDLAKVVTTAETYQWKQGSWTLLDGLPEAKDDSELPYHVVAYDFGAKRNILRMLVDRGCRLTVVPAQTSAEDVLAMNPDGVFLSNGPGDPEPCTYAIEATKTFLDIGLPIFGICLGHQILALASGAKTVKMKFGHHGANHPVKDIDRDVVMITSQNHGFAADEATLPDTLRATHKSLFDGSLQGIHRTDKPAFSFQGHPEASPGPTDAAPLFDHFIELIKLSVNEARSA.

The segment at 1 to 189 (MSKSALLVLE…GLPEAKDDSE (189 aa)) is CPSase. S47, G241, and G243 together coordinate L-glutamine. In terms of domain architecture, Glutamine amidotransferase type-1 spans 193–380 (HVVAYDFGAK…IELIKLSVNE (188 aa)). C269 functions as the Nucleophile in the catalytic mechanism. Residues L270, Q273, N311, G313, and F314 each coordinate L-glutamine. Residues H353 and E355 contribute to the active site.

Belongs to the CarA family. Composed of two chains; the small (or glutamine) chain promotes the hydrolysis of glutamine to ammonia, which is used by the large (or ammonia) chain to synthesize carbamoyl phosphate. Tetramer of heterodimers (alpha,beta)4.

It catalyses the reaction hydrogencarbonate + L-glutamine + 2 ATP + H2O = carbamoyl phosphate + L-glutamate + 2 ADP + phosphate + 2 H(+). The catalysed reaction is L-glutamine + H2O = L-glutamate + NH4(+). It functions in the pathway amino-acid biosynthesis; L-arginine biosynthesis; carbamoyl phosphate from bicarbonate: step 1/1. Its pathway is pyrimidine metabolism; UMP biosynthesis via de novo pathway; (S)-dihydroorotate from bicarbonate: step 1/3. Its function is as follows. Small subunit of the glutamine-dependent carbamoyl phosphate synthetase (CPSase). CPSase catalyzes the formation of carbamoyl phosphate from the ammonia moiety of glutamine, carbonate, and phosphate donated by ATP, constituting the first step of 2 biosynthetic pathways, one leading to arginine and/or urea and the other to pyrimidine nucleotides. The small subunit (glutamine amidotransferase) binds and cleaves glutamine to supply the large subunit with the substrate ammonia. The sequence is that of Carbamoyl phosphate synthase small chain from Photobacterium profundum (strain SS9).